We begin with the raw amino-acid sequence, 249 residues long: Receptor-transporting protein 4 (249 aa).

Over 1 to 227 (MLFPDDFSTW…QGCREPPQRE (227 aa)) the chain is Cytoplasmic. The 3CxxC-type zinc-finger motif lies at 50 to 162 (TVLGRFQCSR…DTRNCEACSL (113 aa)). Residues 173–208 (KVKPPRSPSPLPKSSSPSKSCPPPPQTRNTDFGNKT) form a disordered region. Residues 199–208 (TRNTDFGNKT) show a composition bias toward polar residues. The chain crosses the membrane as a helical span at residues 228 to 248 (IEPPLFLFLSIAAFALFSLFT).

This sequence belongs to the TMEM7 family. In terms of assembly, interacts with TASR16. Interacts with OPRD1 and OPRM1; the interaction promotes cell surface localization of the OPDR1-OPRM1 heterodimer. In terms of tissue distribution, expressed at low levels in olfactory neurons. Upon viral infection, highly expressed in brain and different cells of nervous tissue.

It localises to the membrane. It is found in the cytoplasm. In terms of biological role, chaperone protein that facilitates the trafficking and functional cell surface expression of some G-protein coupled receptors (GPCRs). Promotes functional expression of the bitter taste receptor TAS2R16. Also promotes functional expression of the opioid receptor heterodimer OPRD1-OPRM1. In addition, acts as a potent IFN-inducible suppressor of pathogens including lyssavirus rabies, influenza A or yellow fever virus. Mechanistically, associates with the viral replicase, binds viral RNA, and thereby suppresses viral genome amplification that replicates at the endoplasmic reticulum. In addition, restores antiviral signaling by interacting with and sequestering influenza virus protein NS1. The protein is Receptor-transporting protein 4 (Rtp4) of Mus musculus (Mouse).